Here is a 388-residue protein sequence, read N- to C-terminus: Queuine tRNA-ribosyltransferase (388 aa).

D90 functions as the Proton acceptor in the catalytic mechanism. Residues 90-94 (DSGGF), D144, Q205, and G232 each bind substrate. An RNA binding region spans residues 263–269 (GVGTPED). The active-site Nucleophile is the D282. Positions 287–291 (TRNAR) are RNA binding; important for wobble base 34 recognition. Positions 320, 322, 325, and 351 each coordinate Zn(2+).

It belongs to the queuine tRNA-ribosyltransferase family. As to quaternary structure, homodimer. Within each dimer, one monomer is responsible for RNA recognition and catalysis, while the other monomer binds to the replacement base PreQ1. Zn(2+) is required as a cofactor.

The catalysed reaction is 7-aminomethyl-7-carbaguanine + guanosine(34) in tRNA = 7-aminomethyl-7-carbaguanosine(34) in tRNA + guanine. It participates in tRNA modification; tRNA-queuosine biosynthesis. Its function is as follows. Catalyzes the base-exchange of a guanine (G) residue with the queuine precursor 7-aminomethyl-7-deazaguanine (PreQ1) at position 34 (anticodon wobble position) in tRNAs with GU(N) anticodons (tRNA-Asp, -Asn, -His and -Tyr). Catalysis occurs through a double-displacement mechanism. The nucleophile active site attacks the C1' of nucleotide 34 to detach the guanine base from the RNA, forming a covalent enzyme-RNA intermediate. The proton acceptor active site deprotonates the incoming PreQ1, allowing a nucleophilic attack on the C1' of the ribose to form the product. After dissociation, two additional enzymatic reactions on the tRNA convert PreQ1 to queuine (Q), resulting in the hypermodified nucleoside queuosine (7-(((4,5-cis-dihydroxy-2-cyclopenten-1-yl)amino)methyl)-7-deazaguanosine). The polypeptide is Queuine tRNA-ribosyltransferase (Campylobacter curvus (strain 525.92)).